A 1051-amino-acid chain; its full sequence is Lateral signaling target protein 2 homolog (1051 aa).

Disordered regions lie at residues 305-440 (PLGS…DEDL), 516-552 (GSNAATERQQQQQHMDELQPGDQQQQQQQLQDEPSTS), 566-703 (HLPS…NASS), and 837-968 (IDLA…DGKA). The span at 319–358 (NNTSSSTSNNNNNNNNNSSSSSSSSSGSGSNTAKTSTSST) shows a compositional bias: low complexity. The span at 360-370 (KAVERLVDHRN) shows a compositional bias: basic and acidic residues. Positions 371–391 (NNSSTVAGATQPSTARSPSML) are enriched in polar residues. 2 stretches are compositionally biased toward low complexity: residues 392–401 (SLSAGSTPTA) and 409–428 (PSHSIASTSSAATTSTNPPA). The segment covering 518 to 528 (NAATERQQQQQ) has biased composition (polar residues). Composition is skewed to low complexity over residues 533-549 (LQPGDQQQQQQQLQDEP) and 568-582 (PSSSSENEQAPSSNQ). A phosphoserine mark is found at Ser-569 and Ser-570. Residues 583-596 (QTTIKTPNGNQSMP) are compositionally biased toward polar residues. Residues 597–606 (NSSSSSSNHN) show a composition bias toward low complexity. Basic residues-rich tracts occupy residues 607–637 (NNRHRHSHSHSHSSHHHHHHHRHHHHTHPHH) and 650–672 (HHHHHHHHHQSHPHRINRSARKR). The segment covering 692–703 (TPGSADTSNASS) has biased composition (polar residues). Low complexity predominate over residues 840–852 (ASGNNNGNSNAAA). Ser-861 bears the Phosphoserine mark. Low complexity-rich tracts occupy residues 879–924 (QQQQ…SPIS) and 937–960 (SSIGTTSTITPSTAAATATTMSPP). The segment at 965–1025 (DGKAPRCMSC…VCRECYVREV (61 aa)) adopts an FYVE-type zinc-finger fold. Cys-971, Cys-974, Cys-987, Cys-990, Cys-995, Cys-998, Cys-1017, and Cys-1020 together coordinate Zn(2+). Residues 1028 to 1051 (SRQAPAQPSQAHGQASRPQAASAS) are disordered.

This sequence belongs to the lst-2 family.

In terms of biological role, negative regulator of epidermal growth factor receptor (EGFR) signaling. This is Lateral signaling target protein 2 homolog from Drosophila mojavensis (Fruit fly).